Consider the following 116-residue polypeptide: Non-specific lipid transfer protein GPI-anchored 17 (116 aa).

Residues 1-24 form the signal peptide; it reads MKIGVVLVLLTVFVVVMSSTSVSA. 3 disulfides stabilise this stretch: cysteine 31-cysteine 74, cysteine 42-cysteine 58, and cysteine 59-cysteine 99. A lipid anchor (GPI-anchor amidated asparagine) is attached at asparagine 107. The propeptide at 108–116 is removed in mature form; that stretch reads GKNFKNTSL. Asparagine 113 is a glycosylation site (N-linked (GlcNAc...) asparagine).

The protein belongs to the plant LTP family. As to expression, expressed in seedlings, preferentially in roots.

Its subcellular location is the cell membrane. Its function is as follows. Probable lipid transfer protein. The protein is Non-specific lipid transfer protein GPI-anchored 17 of Arabidopsis thaliana (Mouse-ear cress).